A 730-amino-acid polypeptide reads, in one-letter code: Catalase-peroxidase 1 (730 aa).

A cross-link (tryptophyl-tyrosyl-methioninium (Trp-Tyr) (with M-243)) is located at residues 92 to 217; the sequence is WHSAGTYRTT…LGAAVMGLIY (126 aa). The Proton acceptor role is filled by His93. A cross-link (tryptophyl-tyrosyl-methioninium (Tyr-Met) (with W-92)) is located at residues 217–243; that stretch reads YVDPEGPNGNPDPLASAENIRESFGRM. His258 contacts heme b.

It belongs to the peroxidase family. Peroxidase/catalase subfamily. As to quaternary structure, homodimer or homotetramer. Heme b serves as cofactor. Post-translationally, formation of the three residue Trp-Tyr-Met cross-link is important for the catalase, but not the peroxidase activity of the enzyme.

It carries out the reaction H2O2 + AH2 = A + 2 H2O. It catalyses the reaction 2 H2O2 = O2 + 2 H2O. In terms of biological role, bifunctional enzyme with both catalase and broad-spectrum peroxidase activity. The polypeptide is Catalase-peroxidase 1 (Haloarcula marismortui (strain ATCC 43049 / DSM 3752 / JCM 8966 / VKM B-1809) (Halobacterium marismortui)).